Reading from the N-terminus, the 352-residue chain is tRNA N6-adenosine threonylcarbamoyltransferase (352 aa).

The Fe cation site is built by histidine 109 and histidine 113. Substrate-binding positions include 136–140 (TVSGG), aspartate 169, glycine 182, aspartate 186, and asparagine 284. Aspartate 312 is a binding site for Fe cation.

It belongs to the KAE1 / TsaD family. It depends on Fe(2+) as a cofactor.

Its subcellular location is the cytoplasm. It carries out the reaction L-threonylcarbamoyladenylate + adenosine(37) in tRNA = N(6)-L-threonylcarbamoyladenosine(37) in tRNA + AMP + H(+). In terms of biological role, required for the formation of a threonylcarbamoyl group on adenosine at position 37 (t(6)A37) in tRNAs that read codons beginning with adenine. Is involved in the transfer of the threonylcarbamoyl moiety of threonylcarbamoyl-AMP (TC-AMP) to the N6 group of A37, together with TsaE and TsaB. TsaD likely plays a direct catalytic role in this reaction. The chain is tRNA N6-adenosine threonylcarbamoyltransferase from Chloroherpeton thalassium (strain ATCC 35110 / GB-78).